The chain runs to 242 residues: Small ribosomal subunit protein uS2 (242 aa).

It belongs to the universal ribosomal protein uS2 family.

This chain is Small ribosomal subunit protein uS2, found in Shewanella oneidensis (strain ATCC 700550 / JCM 31522 / CIP 106686 / LMG 19005 / NCIMB 14063 / MR-1).